A 745-amino-acid chain; its full sequence is Translation initiation factor IF-2 (745 aa).

The segment at Met1–Arg154 is disordered. Residues Thr36–Asn56 show a composition bias toward polar residues. Residues Ala68–Ala98 are compositionally biased toward low complexity. The span at Arg99–Gly113 shows a compositional bias: gly residues. The span at Asn114 to Arg126 shows a compositional bias: low complexity. A compositionally biased stretch (basic and acidic residues) spans Gln127 to Leu138. The tr-type G domain maps to Pro241–Arg410. The interval Gly250–Thr257 is G1. Gly250–Thr257 contributes to the GTP binding site. Residues Gly275–His279 form a G2 region. The G3 stretch occupies residues Asp296–Gly299. GTP contacts are provided by residues Asp296–His300 and Asn350–Asp353. Residues Asn350 to Asp353 form a G4 region. Residues Ser386–Arg388 form a G5 region.

The protein belongs to the TRAFAC class translation factor GTPase superfamily. Classic translation factor GTPase family. IF-2 subfamily.

It localises to the cytoplasm. Its function is as follows. One of the essential components for the initiation of protein synthesis. Protects formylmethionyl-tRNA from spontaneous hydrolysis and promotes its binding to the 30S ribosomal subunits. Also involved in the hydrolysis of GTP during the formation of the 70S ribosomal complex. The sequence is that of Translation initiation factor IF-2 from Chloroflexus aurantiacus (strain ATCC 29366 / DSM 635 / J-10-fl).